Reading from the N-terminus, the 478-residue chain is Serine hydroxymethyltransferase, cytosolic (478 aa).

Lysine 251 is modified (N6-(pyridoxal phosphate)lysine).

It belongs to the SHMT family. In terms of assembly, homotetramer. Identified in complex with FAM175B and the other subunits of the BRISC complex, at least composed of FAM175B/ABRO1, BRCC3/BRCC36, BABAM2 and BABAM1/NBA1. The cofactor is pyridoxal 5'-phosphate.

Its subcellular location is the cytoplasm. The enzyme catalyses (6R)-5,10-methylene-5,6,7,8-tetrahydrofolate + glycine + H2O = (6S)-5,6,7,8-tetrahydrofolate + L-serine. Its pathway is one-carbon metabolism; tetrahydrofolate interconversion. In terms of biological role, interconversion of serine and glycine. This chain is Serine hydroxymethyltransferase, cytosolic (Shmt1), found in Mus musculus (Mouse).